We begin with the raw amino-acid sequence, 757 residues long: 5-methyltetrahydropteroyltriglutamate--homocysteine methyltransferase (757 aa).

5-methyltetrahydropteroyltri-L-glutamate is bound by residues 17–20 (RELK) and Lys-117. L-homocysteine-binding positions include 434–436 (IGS) and Glu-487. Residues 434–436 (IGS) and Glu-487 each bind L-methionine. Residues 518–519 (RC) and Trp-564 each bind 5-methyltetrahydropteroyltri-L-glutamate. Asp-602 serves as a coordination point for L-homocysteine. Asp-602 contributes to the L-methionine binding site. Glu-608 lines the 5-methyltetrahydropteroyltri-L-glutamate pocket. Residues His-644, Cys-646, and Glu-668 each coordinate Zn(2+). His-697 serves as the catalytic Proton donor. A Zn(2+)-binding site is contributed by Cys-729.

This sequence belongs to the vitamin-B12 independent methionine synthase family. Requires Zn(2+) as cofactor.

The enzyme catalyses 5-methyltetrahydropteroyltri-L-glutamate + L-homocysteine = tetrahydropteroyltri-L-glutamate + L-methionine. It participates in amino-acid biosynthesis; L-methionine biosynthesis via de novo pathway; L-methionine from L-homocysteine (MetE route): step 1/1. In terms of biological role, catalyzes the transfer of a methyl group from 5-methyltetrahydrofolate to homocysteine resulting in methionine formation. The sequence is that of 5-methyltetrahydropteroyltriglutamate--homocysteine methyltransferase from Proteus mirabilis (strain HI4320).